A 371-amino-acid polypeptide reads, in one-letter code: 4-hydroxyphenylpyruvate dioxygenase-like protein (371 aa).

2 consecutive VOC domains span residues Arg-7 to Arg-135 and His-160 to Lys-328. Fe cation-binding residues include His-163, His-258, and Glu-339.

Belongs to the 4HPPD family. The cofactor is Fe cation.

The protein localises to the mitochondrion. It carries out the reaction 3-(4-hydroxyphenyl)pyruvate + O2 = (S)-4-hydroxymandelate + CO2. Functionally, iron-dependent dioxygenase that catalyzes the conversion of 4-hydroxyphenylpyruvate (4-HPPA) to 4-hydroxymandelate (4-HMA) in the mitochondria, one of the steps in the biosynthesis of coenzyme Q10 from tyrosine. This is 4-hydroxyphenylpyruvate dioxygenase-like protein from Mus musculus (Mouse).